Reading from the N-terminus, the 334-residue chain is Ornithine carbamoyltransferase subunit F (334 aa).

Carbamoyl phosphate is bound by residues 56-59 (STRT), glutamine 83, arginine 107, and 134-137 (HPTQ). L-ornithine-binding positions include asparagine 168, aspartate 232, and 236-237 (SM). Carbamoyl phosphate contacts are provided by residues 274–275 (CL) and arginine 320.

This sequence belongs to the aspartate/ornithine carbamoyltransferase superfamily. OTCase family. In E.coli strain K12, trimer of identical or non-identical chains are composed of ArgI (I) and/or ArgF (F). The trimer has the following composition: FFI, FFF, FII, III. E.coli strains B and W, which are known to contain only ArgI, produce only a trimer of identical chains (III).

It localises to the cytoplasm. The enzyme catalyses carbamoyl phosphate + L-ornithine = L-citrulline + phosphate + H(+). It functions in the pathway amino-acid biosynthesis; L-arginine biosynthesis; L-arginine from L-ornithine and carbamoyl phosphate: step 1/3. In terms of biological role, reversibly catalyzes the transfer of the carbamoyl group from carbamoyl phosphate (CP) to the N(epsilon) atom of ornithine (ORN) to produce L-citrulline, which is a substrate for argininosuccinate synthetase, the enzyme involved in the final step in arginine biosynthesis. The protein is Ornithine carbamoyltransferase subunit F of Escherichia coli (strain K12).